The primary structure comprises 329 residues: Glyceraldehyde-3-phosphate dehydrogenase 1 (329 aa).

NAD(+)-binding positions include 11–12 (RI), Asp-33, and Glu-77. Ser-148 bears the Phosphoserine mark. 148–150 (SCT) contacts D-glyceraldehyde 3-phosphate. Catalysis depends on Cys-149, which acts as the Nucleophile. Residue Ser-177 is modified to Phosphoserine. Thr-179 is a binding site for D-glyceraldehyde 3-phosphate. The residue at position 200 (Ser-200) is a Phosphoserine. D-glyceraldehyde 3-phosphate-binding positions include 208–209 (TG) and Arg-231. An NAD(+)-binding site is contributed by Asn-313.

The protein belongs to the glyceraldehyde-3-phosphate dehydrogenase family. Homotetramer.

It is found in the cytoplasm. It catalyses the reaction D-glyceraldehyde 3-phosphate + phosphate + NAD(+) = (2R)-3-phospho-glyceroyl phosphate + NADH + H(+). It functions in the pathway carbohydrate degradation; glycolysis; pyruvate from D-glyceraldehyde 3-phosphate: step 1/5. The protein is Glyceraldehyde-3-phosphate dehydrogenase 1 of Kluyveromyces marxianus (Yeast).